The primary structure comprises 478 residues: Zinc metalloproteinase/disintegrin ussurin (478 aa).

An N-terminal signal peptide occupies residues 1–20 (MIQVLLVTICLAAFPYQGSS). The propeptide occupies 21–190 (IILESGNVND…KKASPLVVTT (170 aa)). The 197-residue stretch at 193-389 (RYVELVVVAD…RNPQCILNKP (197 aa)) folds into the Peptidase M12B domain. Residues Glu-196 and Asp-280 each contribute to the Ca(2+) site. 3 disulfides stabilise this stretch: Cys-304–Cys-384, Cys-344–Cys-368, and Cys-346–Cys-351. A Zn(2+)-binding site is contributed by His-329. The active site involves Glu-330. The Zn(2+) site is built by His-333 and His-339. Cys-384 and Asn-387 together coordinate Ca(2+). Positions 390–413 (LRTDIVSTPVSGNELLEAGEECDC) are excised as a propeptide. In terms of domain architecture, Disintegrin spans 397-478 (TPVSGNELLE…AGCPRNPFHA (82 aa)). Disulfide bonds link Cys-411/Cys-426, Cys-413/Cys-421, Cys-420/Cys-443, Cys-434/Cys-440, Cys-439/Cys-464, and Cys-452/Cys-471. The Cell attachment site motif lies at 456–458 (RGD).

The protein belongs to the venom metalloproteinase (M12B) family. P-II subfamily. P-IIa sub-subfamily. In terms of assembly, monomer. Zn(2+) serves as cofactor. Expressed by the venom gland.

It localises to the secreted. Functionally, impairs hemostasis in the envenomed animal. Its function is as follows. Inhibits platelet aggregation induced by ADP, thrombin, platelet-activating factor and collagen. Acts by inhibiting fibrinogen interaction with platelet receptors GPIIb/GPIIIa (ITGA2B/ITGB3). The chain is Zinc metalloproteinase/disintegrin ussurin from Gloydius ussuriensis (Ussuri mamushi).